A 161-amino-acid chain; its full sequence is Phosphopantetheine adenylyltransferase (161 aa).

A substrate-binding site is contributed by Ser9. ATP-binding positions include 9 to 10 (SF) and His17. Substrate-binding residues include Lys41, Thr73, and Arg87. Residues 88–90 (GLR), Glu98, and 123–129 (YSFISST) each bind ATP.

Belongs to the bacterial CoaD family. As to quaternary structure, homohexamer. Mg(2+) serves as cofactor.

The protein resides in the cytoplasm. It carries out the reaction (R)-4'-phosphopantetheine + ATP + H(+) = 3'-dephospho-CoA + diphosphate. The protein operates within cofactor biosynthesis; coenzyme A biosynthesis; CoA from (R)-pantothenate: step 4/5. Reversibly transfers an adenylyl group from ATP to 4'-phosphopantetheine, yielding dephospho-CoA (dPCoA) and pyrophosphate. This Desulforamulus reducens (strain ATCC BAA-1160 / DSM 100696 / MI-1) (Desulfotomaculum reducens) protein is Phosphopantetheine adenylyltransferase.